The sequence spans 225 residues: Pre-mRNA-splicing factor SPF27 (225 aa).

Residues 138 to 222 adopt a coiled-coil conformation; the sequence is SNDNLALMIE…QGDENKENIR (85 aa).

Belongs to the SPF27 family. In terms of assembly, component of the pre-catalytic and catalytic spliceosome complexes. Component of the postcatalytic spliceosome P complex.

The protein resides in the nucleus. Its function is as follows. Required for pre-mRNA splicing as component of the activated spliceosome. May have a scaffolding role in the spliceosome assembly as it contacts all other components of the core complex. The polypeptide is Pre-mRNA-splicing factor SPF27 (bcas2) (Danio rerio (Zebrafish)).